A 396-amino-acid polypeptide reads, in one-letter code: Probable sugar efflux transporter (396 aa).

The next 12 helical transmembrane spans lie at 15–35 (VVTLAIAAFIFNTTEFVPVGL), 50–70 (VGIMLTIYAWVVAVMSLPFML), 81–101 (LICLFVLFIASHVLSFLAWNF), 103–123 (VLVISRIGIAFAHAIFWSITA), 136–156 (AQALSLIATGTALAMVLGLPI), 169–189 (TFFAIGMGALITLLCLIKLLP), 209–229 (PALMSLYVLTVVVVTAHYTAY), 246–266 (FATVLLLILGGAGIIGSLVFG), 275–295 (SLVSIAIALLVICLLLLLPAA), 301–321 (LAILSIFWGIAIMVIGLGMQV), 333–353 (VAMALFSGIFNIGIGAGALVG), and 364–384 (AIGYIGAIPACAALVWAVLIF).

This sequence belongs to the major facilitator superfamily. SotB (TC 2.A.1.2) family.

The protein localises to the cell inner membrane. Involved in the efflux of sugars. The physiological role may be the reduction of the intracellular concentration of toxic sugars or sugar metabolites. This Salmonella schwarzengrund (strain CVM19633) protein is Probable sugar efflux transporter.